A 73-amino-acid polypeptide reads, in one-letter code: MKADIHPDYHLIEVKMTDGTTYQVRSTWGKEGDTMSLDIDPNSHPAWTGGSAKLMDTGGRVSKFKNKYAGLGF.

This sequence belongs to the bacterial ribosomal protein bL31 family. Type A subfamily. As to quaternary structure, part of the 50S ribosomal subunit.

Functionally, binds the 23S rRNA. This Paracoccus denitrificans (strain Pd 1222) protein is Large ribosomal subunit protein bL31.